An 83-amino-acid polypeptide reads, in one-letter code: Bowman-Birk type seed trypsin and chymotrypsin inhibitor (83 aa).

7 disulfide bridges follow: cysteine 18–cysteine 72, cysteine 19–cysteine 34, cysteine 22–cysteine 68, cysteine 24–cysteine 32, cysteine 42–cysteine 49, cysteine 46–cysteine 61, and cysteine 51–cysteine 59.

It belongs to the Bowman-Birk serine protease inhibitor family.

This Vigna unguiculata (Cowpea) protein is Bowman-Birk type seed trypsin and chymotrypsin inhibitor.